The sequence spans 156 residues: Transcriptional regulator MraZ (156 aa).

2 SpoVT-AbrB domains span residues 5–51 and 80–123; these read TFEK…GKAL and MAKL…SREA.

Belongs to the MraZ family. Forms oligomers.

The protein resides in the cytoplasm. It localises to the nucleoid. The sequence is that of Transcriptional regulator MraZ from Caulobacter vibrioides (strain ATCC 19089 / CIP 103742 / CB 15) (Caulobacter crescentus).